The chain runs to 398 residues: Thyrotropin-releasing hormone receptor (398 aa).

Residues 1 to 28 (MENETGSELNQTQLQPRAVVALEYQVVT) lie on the Extracellular side of the membrane. N-linked (GlcNAc...) asparagine glycans are attached at residues Asn-3 and Asn-10. The helical transmembrane segment at 29–51 (ILLVLIICGLGIVGNIMVVLVVM) threads the bilayer. Residues 52 to 61 (RTKHMRTPTN) are Cytoplasmic-facing. A helical membrane pass occupies residues 62–83 (CYLVSLAVADLMVLVAAGLPNI). The Extracellular portion of the chain corresponds to 84 to 99 (TDSIYGSWVYGYVGCL). A disulfide bond links Cys-98 and Cys-179. Residues 100–121 (CITYLQYLGINASSCSITAFTI) form a helical membrane-spanning segment. The Cytoplasmic segment spans residues 122 to 144 (ERYIAICHPIKAQFLCTFSRAKK). The helical transmembrane segment at 145-168 (IIIFVWAFTSIYCMLWFFLLDLNI) threads the bilayer. Over 169-193 (STYKDAIVVSCGYKISRNYYSPIYL) the chain is Extracellular. Residues 194–215 (MDFGVFYVVPMILATVLYGFIA) traverse the membrane as a helical segment. Topologically, residues 216 to 266 (RILFLNPIPSDPKENSNMWKNDSTHQNKNLNSKTSNRYFNSTVSSRKQVTK) are cytoplasmic. A helical transmembrane segment spans residues 267–288 (MLAVVVILFALLWMPYRTLVVV). Residues 289–296 (NSFLSSPF) lie on the Extracellular side of the membrane. A helical transmembrane segment spans residues 297–319 (QENWFLLFCRICIYLNSAINPVI). At 320–398 (YNLMSQKFRA…LASEITFNQS (79 aa)) the chain is on the cytoplasmic side.

This sequence belongs to the G-protein coupled receptor 1 family.

It is found in the cell membrane. Functionally, receptor for thyrotropin-releasing hormone (TRH). Upon ligand binding, this G-protein-coupled receptor triggers activation of the phosphatidylinositol (IP3)-calcium-protein kinase C (PKC) pathway. This is Thyrotropin-releasing hormone receptor (TRHR) from Bos taurus (Bovine).